The chain runs to 360 residues: MSQSLVISVDAMGGDHGPSIVVPGIAQALQALPGVRFLLHGDGAAIEAELAKHPGAKAVSEVRHCDKAIGMDEKPAQAMRRGKGSSMWNAVEAVRENEAQACVSAGNTGALMAISKLILRMGAELERPAIVANWPTMKGVTTVLDVGANVESDASQLVEFAIMGAAFHHAVHGSKRPTVGLLNVGSEDQKGHEEVREAHAILRETTLDFDYHGFVEGNDIAYGTVDVVVTDGFTGNVALKTAEGLARFFSNEIKSTLTSGPLAMLGALIASGALKKMRHRLDPSRVNGAPLLGLNGIVVKSHGGADANGFASAIRVATNLARSDFRAEIDRNLKRLTATAAAIKSGDGQGPGEDAQGVAE.

It belongs to the PlsX family. Homodimer. Probably interacts with PlsY.

The protein resides in the cytoplasm. It carries out the reaction a fatty acyl-[ACP] + phosphate = an acyl phosphate + holo-[ACP]. It functions in the pathway lipid metabolism; phospholipid metabolism. Functionally, catalyzes the reversible formation of acyl-phosphate (acyl-PO(4)) from acyl-[acyl-carrier-protein] (acyl-ACP). This enzyme utilizes acyl-ACP as fatty acyl donor, but not acyl-CoA. The polypeptide is Phosphate acyltransferase (Caulobacter vibrioides (strain ATCC 19089 / CIP 103742 / CB 15) (Caulobacter crescentus)).